We begin with the raw amino-acid sequence, 868 residues long: Lysosomal cholesterol signaling protein (868 aa).

Topologically, residues 1–36 (MDSYFSAKNSTLAGDMNATWPASHGFNATGDPPSMS) are lumenal. The PIN-like transporter stretch occupies residues 1-368 (MDSYFSAKNS…SAWLLTFPTM (368 aa)). N-linked (GlcNAc...) asparagine glycans are attached at residues asparagine 9, asparagine 17, and asparagine 27. A helical transmembrane segment spans residues 37–57 (ITRLFPALLECFGIVLCGYIA). Cholesterol is bound by residues phenylalanine 41 and tyrosine 55. The Cytoplasmic portion of the chain corresponds to 58–77 (GRANIITSTQAKGLGNFVSR). A helical membrane pass occupies residues 78 to 98 (FALPALLFKNMVVLNFSNVDW). At 99–102 (AFLY) the chain is on the lumenal side. The helical transmembrane segment at 103 to 123 (SVLIGKASVFFIVCVLTLLVA) threads the bilayer. At 124 to 131 (SPESRFSK) the chain is on the cytoplasmic side. The discontinuously helical transmembrane segment at 132–152 (AGLFPIFATQSNDFALGYPIV) threads the bilayer. At 153-165 (EALYQSTYPEYLQ) the chain is on the lumenal side. A helical membrane pass occupies residues 166 to 186 (YIYLVAPISLMMLNPIGFIFC). Residues 187–211 (EIQKSKDTQNASQNKAKIVGLGFLR) lie on the Cytoplasmic side of the membrane. The chain crosses the membrane as a discontinuously helical span at residues 212–232 (VLQNPIVFMVFVGIAFNFILD). At 233-241 (KKIPVYMEN) the chain is on the lumenal side. The discontinuously helical transmembrane segment at 242–262 (FLDGLANSFSGSALFYLGLTM) threads the bilayer. Residues 263–271 (VGKIRRLKK) lie on the Cytoplasmic side of the membrane. The cholesterol site is built by glycine 264, lysine 265, and isoleucine 266. Residues 272-292 (SAFVVLTLLITAKLLVLPLLC) form a helical membrane-spanning segment. Residues 293 to 313 (REMVELLDKGDSVVNHTSLSN) are Lumenal-facing. N-linked (GlcNAc...) asparagine glycosylation is present at asparagine 307. The discontinuously helical transmembrane segment at 314 to 334 (YAFLYGVFPVAPGVAIFATQF) threads the bilayer. Residues 335-344 (NMEVEIITSG) are Cytoplasmic-facing. A helical transmembrane segment spans residues 345 to 365 (MVISTFVSAPIMYVSAWLLTF). Residues 366 to 379 (PTMDAKPLAYAIQN) lie on the Lumenal side of the membrane. Positions 378–715 (QNVSFDISII…FGIFGLDKHL (338 aa)) are GPCR. A glycan (N-linked (GlcNAc...) asparagine) is linked at asparagine 379. Residues 380–400 (VSFDISIISLVSLIWSLSILL) traverse the membrane as a helical segment. Residues 401–412 (LSKKYKQLPHML) lie on the Cytoplasmic side of the membrane. Residues 413–433 (TANLLIAQTIVCAGMMIWNFV) form a helical membrane-spanning segment. Topologically, residues 434–436 (KEK) are lumenal. The helical transmembrane segment at 437–457 (NFVGQILVFVLLYSSLYSTYL) threads the bilayer. The Cytoplasmic segment spans residues 458–478 (WTGLLAVSLFLLKKRESVQLP). The helical transmembrane segment at 479–499 (VGIIIISGWGIPALLVGVLLI) threads the bilayer. Residues 500-518 (TGKHNGDSIDSAFFYGKEQ) lie on the Lumenal side of the membrane. Residues 519-539 (MITTAVTLFCSILIAGVSLMC) traverse the membrane as a helical segment. Topologically, residues 540–658 (MNRTTQAGHY…GDPQLTRHVL (119 aa)) are cytoplasmic. Residues 550–582 (EGFGQSQNHKPVEPGSTAFEENPAPTNEPELFP) are disordered. Arginine 655 contacts cholesterol. Residues 659–679 (LCLLLIIGLFANLSSCLWWLF) form a helical membrane-spanning segment. Over 680 to 689 (NHETGRLYVE) the chain is Lumenal. Residues 690 to 710 (LQFFCAVFNFGQGFISFGIFG) form a helical membrane-spanning segment. The Cytoplasmic portion of the chain corresponds to 711–868 (LDKHLIILPF…SSPPSVSPKT (158 aa)). In terms of domain architecture, DEP spans 755–833 (YHRDLCIRNI…DEYLFYRFLQ (79 aa)). Positions 836–868 (PEQSPPARTLRDHQEESYKEIGHSSPPSVSPKT) are disordered. Residues 844–857 (TLRDHQEESYKEIG) show a composition bias toward basic and acidic residues.

In terms of assembly, homodimer; via the transporter region and DEP domain. Interacts with the GATOR1 complex; preventing interaction between GATOR1 and KICSTOR; interaction is disrupted upon cholesterol starvation. As to expression, widely expressed in adult tissues and during development. In brain, widely distributed in forebrain regions, while it shows a more restricted distribution in the midbrain and hindbrain regions. Expressed at highest level in the lateral part of striatum and hippocampus.

It localises to the lysosome membrane. In terms of biological role, cholesterol-binding protein that acts as a regulator of mTORC1 signaling pathway. Acts as a sensor of cholesterol to signal cholesterol sufficiency to mTORC1: in presence of cholesterol, binds cholesterol, leading to disruption of the interaction between the GATOR1 and KICSTOR complexes and promotion of mTORC1 signaling. Upon cholesterol starvation, GPR155/LYCHOS is unable to perturb the association between GATOR1 and KICSTOR, leading to mTORC1 signaling inhibition. Binds indole-3-acetic acid and may play a role in tryptophan metabolism. This Mus musculus (Mouse) protein is Lysosomal cholesterol signaling protein.